A 407-amino-acid polypeptide reads, in one-letter code: 12S rRNA N(4)-cytidine methyltransferase METTL15 (407 aa).

The interval 44 to 63 (EAQEETDQTGIQELHRSQDR) is disordered. Residues 100–102 (GGH), Asp119, Phe146, Asp169, and Gln176 contribute to the S-adenosyl-L-methionine site. At Ser358 the chain carries Phosphoserine. The segment at 386 to 407 (EDEDVQDNPRGRSAKLRAAIKL) is disordered. Residues 397-407 (RSAKLRAAIKL) show a composition bias toward basic residues.

The protein belongs to the methyltransferase superfamily. RsmH family.

It is found in the mitochondrion matrix. It catalyses the reaction cytidine(839) in 12S rRNA + S-adenosyl-L-methionine = N(4)-methylcytidine(839) in 12S rRNA + S-adenosyl-L-homocysteine + H(+). Functionally, N4-methylcytidine (m4C) methyltransferase responsible for the methylation of position C839 in mitochondrial 12S rRNA. Involved in the stabilization of 12S rRNA folding, therefore facilitating the assembly of the mitochondrial small ribosomal subunits. The sequence is that of 12S rRNA N(4)-cytidine methyltransferase METTL15 (METTL15) from Bos taurus (Bovine).